Consider the following 619-residue polypeptide: Phosphoenolpyruvate carboxykinase [GTP] (619 aa).

Residues arginine 81 and 230–232 (YGG) each bind substrate. Lysine 239 and histidine 259 together coordinate Mn(2+). Serine 281 contributes to the substrate binding site. Residue 282–287 (ACGKTN) participates in GTP binding. Residue cysteine 283 is part of the active site. A Mn(2+)-binding site is contributed by aspartate 306. 399 to 401 (NSR) contacts substrate. Residues arginine 401, arginine 432, and 525–528 (YGQN) each bind GTP.

Belongs to the phosphoenolpyruvate carboxykinase [GTP] family. Monomer. Requires Mn(2+) as cofactor.

The enzyme catalyses oxaloacetate + GTP = phosphoenolpyruvate + GDP + CO2. In parasitic nematodes PEPCK carboxylates phosphoenolpyruvate to oxaloacetate thus introducing the products of glycolysis to mitochondrial metabolism. Functionally, catalyzes the conversion of oxaloacetate (OAA) to phosphoenolpyruvate (PEP), the rate-limiting step in the metabolic pathway that produces glucose from lactate and other precursors derived from the citric acid cycle. This is Phosphoenolpyruvate carboxykinase [GTP] (PEPCK) from Haemonchus contortus (Barber pole worm).